A 156-amino-acid polypeptide reads, in one-letter code: Small ribosomal subunit protein uS7 (156 aa).

Belongs to the universal ribosomal protein uS7 family. In terms of assembly, part of the 30S ribosomal subunit. Contacts proteins S9 and S11.

Functionally, one of the primary rRNA binding proteins, it binds directly to 16S rRNA where it nucleates assembly of the head domain of the 30S subunit. Is located at the subunit interface close to the decoding center, probably blocks exit of the E-site tRNA. The polypeptide is Small ribosomal subunit protein uS7 (Polynucleobacter asymbioticus (strain DSM 18221 / CIP 109841 / QLW-P1DMWA-1) (Polynucleobacter necessarius subsp. asymbioticus)).